The following is a 100-amino-acid chain: MHLTSREQEKLMLFLAGELAAKRKARGVKLNYPEAIAYIASHLQEAARDGMSVAEVMQYGATLLTVDDVMGGIAEMVHEVQIEATFPDGTKLVTVHNPIR.

This sequence belongs to the urease gamma subunit family. Heterotrimer of UreA (gamma), UreB (beta) and UreC (alpha) subunits. Three heterotrimers associate to form the active enzyme.

It is found in the cytoplasm. The catalysed reaction is urea + 2 H2O + H(+) = hydrogencarbonate + 2 NH4(+). Its pathway is nitrogen metabolism; urea degradation; CO(2) and NH(3) from urea (urease route): step 1/1. The sequence is that of Urease subunit gamma from Actinobacillus pleuropneumoniae (Haemophilus pleuropneumoniae).